Consider the following 317-residue polypeptide: Aspartate carbamoyltransferase catalytic subunit (317 aa).

2 residues coordinate carbamoyl phosphate: arginine 66 and threonine 67. Lysine 94 provides a ligand contact to L-aspartate. Carbamoyl phosphate contacts are provided by arginine 116, histidine 144, and glutamine 147. 2 residues coordinate L-aspartate: arginine 177 and arginine 231. Carbamoyl phosphate-binding residues include glycine 272 and proline 273.

It belongs to the aspartate/ornithine carbamoyltransferase superfamily. ATCase family. As to quaternary structure, heterododecamer (2C3:3R2) of six catalytic PyrB chains organized as two trimers (C3), and six regulatory PyrI chains organized as three dimers (R2).

The enzyme catalyses carbamoyl phosphate + L-aspartate = N-carbamoyl-L-aspartate + phosphate + H(+). Its pathway is pyrimidine metabolism; UMP biosynthesis via de novo pathway; (S)-dihydroorotate from bicarbonate: step 2/3. Catalyzes the condensation of carbamoyl phosphate and aspartate to form carbamoyl aspartate and inorganic phosphate, the committed step in the de novo pyrimidine nucleotide biosynthesis pathway. This is Aspartate carbamoyltransferase catalytic subunit from Rhodopseudomonas palustris (strain HaA2).